Reading from the N-terminus, the 215-residue chain is Large ribosomal subunit protein uL3 (215 aa).

Position 151 is an N5-methylglutamine (Q151).

The protein belongs to the universal ribosomal protein uL3 family. Part of the 50S ribosomal subunit. Forms a cluster with proteins L14 and L19. In terms of processing, methylated by PrmB.

Functionally, one of the primary rRNA binding proteins, it binds directly near the 3'-end of the 23S rRNA, where it nucleates assembly of the 50S subunit. This chain is Large ribosomal subunit protein uL3, found in Rickettsia massiliae (strain Mtu5).